A 364-amino-acid polypeptide reads, in one-letter code: Mannose-1-phosphate guanyltransferase (364 aa).

It belongs to the transferase hexapeptide repeat family.

It localises to the cytoplasm. It catalyses the reaction alpha-D-mannose 1-phosphate + GTP + H(+) = GDP-alpha-D-mannose + diphosphate. Its pathway is nucleotide-sugar biosynthesis; GDP-alpha-D-mannose biosynthesis; GDP-alpha-D-mannose from alpha-D-mannose 1-phosphate (GTP route): step 1/1. In terms of biological role, involved in cell wall synthesis where it is required for glycosylation. Involved in cell cycle progression through cell-size checkpoint. The chain is Mannose-1-phosphate guanyltransferase (mpg1) from Hypocrea jecorina (Trichoderma reesei).